Reading from the N-terminus, the 348-residue chain is N-formyl peptide receptor 2 (348 aa).

N-linked (GlcNAc...) asparagine glycosylation occurs at asparagine 1. At 1-24 (NFSTPLNEHEEVSYESAGYTVLQI) the chain is on the extracellular side. The helical transmembrane segment at 25–47 (LPLVVLGVTFVLGVLGNGLVIWV) threads the bilayer. The Cytoplasmic segment spans residues 48–58 (AGFRMTRTVTT). A helical transmembrane segment spans residues 59 to 80 (ICYLNLPLADFSFTATLPFLIV). Over 81 to 97 (SMAMGEKWPFGWFLCKL) the chain is Extracellular. A disulfide bond links cysteine 95 and cysteine 173. A helical transmembrane segment spans residues 98–118 (IHIVVDINLFGSVFLIGFIAL). The Cytoplasmic segment spans residues 119–137 (DRCICVLHPVWAQNHRTVS). Residues 138–159 (LAMKVIIGPWILALVLTLPVFL) traverse the membrane as a helical segment. Residues 160 to 202 (FLTTVTIPNGDTYCTFNFASWGGTPEERKNVAITMLTARGIIR) are Extracellular-facing. A helical transmembrane segment spans residues 203–223 (FVIGFSMPMSIVAICYGLIAA). Residues 224–239 (KIHKKGMIKSSRPLRV) are Cytoplasmic-facing. The helical transmembrane segment at 240–263 (LTAVVASFFICWFPFQLVALLSTV) threads the bilayer. Residues 264 to 283 (WLKEMLFYGKYKIINILVNP) are Extracellular-facing. Residues 284–303 (TSSLAFFNSCLNPMLYVFVG) traverse the membrane as a helical segment. Topologically, residues 304-348 (QDFRERLIRSLPTSLERALSEDSAPTNDTAAKCASPPAETELQAM) are cytoplasmic. The disordered stretch occupies residues 323-348 (SEDSAPTNDTAAKCASPPAETELQAM).

This sequence belongs to the G-protein coupled receptor 1 family. In terms of assembly, interacts with APP; the interaction takes place at the cell surface and the complex is then rapidly internalized.

The protein resides in the cell membrane. Low affinity receptor for N-formyl-methionyl peptides, which are powerful neutrophil chemotactic factors. Binding of FMLP to the receptor causes activation of neutrophils. This response is mediated via a G-protein that activates a phosphatidylinositol-calcium second messenger system. Receptor for the chemokine-like protein FAM19A5, mediating FAM19A5-stimulated macrophage chemotaxis and the inhibitory effect on TNFSF11/RANKL-induced osteoclast differentiation. In Pongo pygmaeus (Bornean orangutan), this protein is N-formyl peptide receptor 2 (FPR2).